Reading from the N-terminus, the 105-residue chain is SAGA-associated factor 11 (105 aa).

Residues 76 to 97 (FRCPNCSRDLSANRFAAHLERC) form an SGF11-type zinc finger.

It belongs to the SGF11 family. Component of the 1.8 MDa SAGA transcription coactivator-HAT complex. SAGA is built of 5 distinct domains with specialized functions. Within the SAGA complex, SUS1, SGF11, SGF73 and UBP8 form an additional subcomplex of SAGA called the DUB module (deubiquitination module). Interacts directly with SGF73, SUS1 and UBP8.

It localises to the nucleus. Functions as a component of the transcription regulatory histone acetylation (HAT) complex SAGA. At the promoters, SAGA is required for recruitment of the basal transcription machinery. It influences RNA polymerase II transcriptional activity through different activities such as TBP interaction and promoter selectivity, interaction with transcription activators, and chromatin modification through histone acetylation and deubiquitination. SAGA acetylates nucleosomal histone H3 to some extent (to form H3K9ac, H3K14ac, H3K18ac and H3K23ac). SAGA interacts with DNA via upstream activating sequences (UASs). Involved in transcriptional regulation of a subset of SAGA-regulated genes. Within the SAGA complex, participates in a subcomplex, that specifically deubiquitinates histones H2B. The protein is SAGA-associated factor 11 of Eremothecium gossypii (strain ATCC 10895 / CBS 109.51 / FGSC 9923 / NRRL Y-1056) (Yeast).